The chain runs to 98 residues: NADH-ubiquinone oxidoreductase chain 4L (98 aa).

Transmembrane regions (helical) follow at residues 1-21 (MTMV…GLLM), 29-49 (SLLC…VTIL), and 61-81 (IILL…LVMV).

It belongs to the complex I subunit 4L family. As to quaternary structure, core subunit of respiratory chain NADH dehydrogenase (Complex I) which is composed of 45 different subunits.

The protein resides in the mitochondrion inner membrane. It catalyses the reaction a ubiquinone + NADH + 5 H(+)(in) = a ubiquinol + NAD(+) + 4 H(+)(out). Functionally, core subunit of the mitochondrial membrane respiratory chain NADH dehydrogenase (Complex I) which catalyzes electron transfer from NADH through the respiratory chain, using ubiquinone as an electron acceptor. Part of the enzyme membrane arm which is embedded in the lipid bilayer and involved in proton translocation. The polypeptide is NADH-ubiquinone oxidoreductase chain 4L (MT-ND4L) (Neomonachus schauinslandi (Hawaiian monk seal)).